The sequence spans 202 residues: Ras-related protein ORAB-1 (202 aa).

Residues 15 to 23 (GDSGVGKSC), 33 to 40 (YTESYIST), 63 to 67 (DTAGQ), 121 to 124 (NKCD), and 151 to 153 (SAK) contribute to the GTP site. Residues 37 to 45 (YISTIGVDF) carry the Effector region motif. The disordered stretch occupies residues 173-202 (MGPGATSGGSEKSNVNIQSTPVKSSGGGCC). Polar residues predominate over residues 180–195 (GGSEKSNVNIQSTPVK). Residues cysteine 201 and cysteine 202 are each lipidated (S-geranylgeranyl cysteine).

Belongs to the small GTPase superfamily. Rab family.

Its subcellular location is the cell membrane. Protein transport. Probably involved in vesicular traffic. The sequence is that of Ras-related protein ORAB-1 from Diplobatis ommata (Ocellated electric ray).